Reading from the N-terminus, the 526-residue chain is 3',5'-cyclic-nucleotide phosphodiesterase 2 (526 aa).

One can recognise a PDEase domain in the interval 182–526 (RNIEFMSFLS…EYWMKHKKPQ (345 aa)). Residue His265 is the Proton donor of the active site. Positions 269, 302, 303, and 400 each coordinate a divalent metal cation.

This sequence belongs to the cyclic nucleotide phosphodiesterase family. As to quaternary structure, monomer. Requires a divalent metal cation as cofactor.

The enzyme catalyses 3',5'-cyclic AMP + H2O = AMP + H(+). Its function is as follows. Controls the level of cAMP in yeast cells, together with the low-affinity cAMP phosphodiesterase (PDE1). This Saccharomyces cerevisiae (strain ATCC 204508 / S288c) (Baker's yeast) protein is 3',5'-cyclic-nucleotide phosphodiesterase 2.